The sequence spans 139 residues: Endoribonuclease YbeY (139 aa).

Residues His99, His103, and His109 each contribute to the Zn(2+) site.

This sequence belongs to the endoribonuclease YbeY family. Zn(2+) serves as cofactor.

It localises to the cytoplasm. Functionally, single strand-specific metallo-endoribonuclease involved in late-stage 70S ribosome quality control and in maturation of the 3' terminus of the 16S rRNA. This is Endoribonuclease YbeY from Nautilia profundicola (strain ATCC BAA-1463 / DSM 18972 / AmH).